The chain runs to 350 residues: MFVDNIRIFARAGKGGNGLVSFRRAKFVPKGGPDGGDGGDGGSVILEVDPHTNDLRSFFYDPKLIATDGVGGQSAKKHGKNGKSVIGKVPPGTIIYRSNASSMAEATWLEREGEGIELEKIADLTEIGTRFTLCQGGLGGKGNWHFRSATNQAPTEAEMGTEGEEGVFFMELRRIADAGLVGYPNAGKSTLLGDISEAKPKVASYPFTTLQPIIGVVEFDSFRRCVVADIPGIIEGAHNNRGLGHEFLRHITRCKVLVFVLDMAGSEGRDPIEDLQNLRTEIKLYSEDLAKQPWFVVANKMDLEGAEENLANFRMRFPKVDIIPISALNGDGISRLRNRLDELVGYKFIR.

The Obg domain maps to 1–175 (MFVDNIRIFA…GVFFMELRRI (175 aa)). Residues 176-345 (ADAGLVGYPN…LRNRLDELVG (170 aa)) form the OBG-type G domain. Residues 182–189 (GYPNAGKS), 207–211 (FTTLQ), 229–232 (DIPG), 299–302 (NKMD), and 326–328 (SAL) contribute to the GTP site. Mg(2+)-binding residues include Ser189 and Thr209.

Belongs to the TRAFAC class OBG-HflX-like GTPase superfamily. OBG GTPase family. Monomer. Mg(2+) serves as cofactor.

It is found in the cytoplasm. Functionally, an essential GTPase which binds GTP, GDP and possibly (p)ppGpp with moderate affinity, with high nucleotide exchange rates and a fairly low GTP hydrolysis rate. Plays a role in control of the cell cycle, stress response, ribosome biogenesis and in those bacteria that undergo differentiation, in morphogenesis control. In Akkermansia muciniphila (strain ATCC BAA-835 / DSM 22959 / JCM 33894 / BCRC 81048 / CCUG 64013 / CIP 107961 / Muc), this protein is GTPase Obg.